A 523-amino-acid chain; its full sequence is Flavonoid 3',5'-hydroxylase (523 aa).

Heme is bound at residue C460.

Belongs to the cytochrome P450 family. The cofactor is heme.

It carries out the reaction a 3',5'-unsubstituted flavanone + 2 reduced [NADPH--hemoprotein reductase] + 2 O2 = a 3',5'-dihydroxyflavanone + 2 oxidized [NADPH--hemoprotein reductase] + 2 H2O + 2 H(+). It functions in the pathway pigment biosynthesis; anthocyanin biosynthesis. Functionally, catalyzes the 3'5'-hydroxylation of naringenin and eriodictyol to form 5,7,3,'4',5'-pentahydroxyflavanone and 3',5'-hydroxylation of dihydrokaempferol and dihydroquercetin to form dihydromyricetin. In Campanula medium (Canterbury bells), this protein is Flavonoid 3',5'-hydroxylase (CYP75A6).